The following is a 691-amino-acid chain: Elongation factor G (691 aa).

The 275-residue stretch at 8–282 (ERVRNIGIAA…AVVDYLPAPV (275 aa)) folds into the tr-type G domain. GTP-binding positions include 17–24 (AHIDAGKT), 81–85 (DTPGH), and 135–138 (NKMD).

This sequence belongs to the TRAFAC class translation factor GTPase superfamily. Classic translation factor GTPase family. EF-G/EF-2 subfamily.

The protein resides in the cytoplasm. Functionally, catalyzes the GTP-dependent ribosomal translocation step during translation elongation. During this step, the ribosome changes from the pre-translocational (PRE) to the post-translocational (POST) state as the newly formed A-site-bound peptidyl-tRNA and P-site-bound deacylated tRNA move to the P and E sites, respectively. Catalyzes the coordinated movement of the two tRNA molecules, the mRNA and conformational changes in the ribosome. The protein is Elongation factor G of Prochlorococcus marinus (strain MIT 9313).